Here is a 284-residue protein sequence, read N- to C-terminus: 4-diphosphocytidyl-2-C-methyl-D-erythritol kinase (284 aa).

The active site involves Lys-14. 98-108 is a binding site for ATP; sequence PMGGGLGGGSS. Asp-140 is a catalytic residue.

It belongs to the GHMP kinase family. IspE subfamily.

It catalyses the reaction 4-CDP-2-C-methyl-D-erythritol + ATP = 4-CDP-2-C-methyl-D-erythritol 2-phosphate + ADP + H(+). It participates in isoprenoid biosynthesis; isopentenyl diphosphate biosynthesis via DXP pathway; isopentenyl diphosphate from 1-deoxy-D-xylulose 5-phosphate: step 3/6. Functionally, catalyzes the phosphorylation of the position 2 hydroxy group of 4-diphosphocytidyl-2C-methyl-D-erythritol. This is 4-diphosphocytidyl-2-C-methyl-D-erythritol kinase from Shewanella pealeana (strain ATCC 700345 / ANG-SQ1).